Here is a 520-residue protein sequence, read N- to C-terminus: Putative thymidine phosphorylase 1 (520 aa).

This sequence belongs to the thymidine/pyrimidine-nucleoside phosphorylase family. Type 2 subfamily.

The catalysed reaction is thymidine + phosphate = 2-deoxy-alpha-D-ribose 1-phosphate + thymine. This Cupriavidus necator (strain ATCC 17699 / DSM 428 / KCTC 22496 / NCIMB 10442 / H16 / Stanier 337) (Ralstonia eutropha) protein is Putative thymidine phosphorylase 1.